The chain runs to 615 residues: Deoxyribodipyrimidine photo-lyase (615 aa).

The segment at 1–53 (MAPSKRKASAPPQTSHVNGNPSADKKRKTTTDAPPTNPNTSSDPLRAPHPFYK) is disordered. Residues 11–21 (PPQTSHVNGNP) show a composition bias toward polar residues. Residues 31 to 40 (TDAPPTNPNT) are compositionally biased toward low complexity. In terms of domain architecture, Photolyase/cryptochrome alpha/beta spans 108–249 (QAVVHWFKMD…AADVVHDTCV (142 aa)). Residue Y352 coordinates FAD. A DNA-binding site is contributed by R356. 364 to 368 (TSNLS) serves as a coordination point for FAD. Interaction with DNA stretches follow at residues 407–414 (EVAWRDFY) and 474–475 (NR). 505-507 (DGD) is an FAD binding site. A DNA-binding site is contributed by Q537.

It belongs to the DNA photolyase class-1 family. Monomer. Requires FAD as cofactor. The cofactor is (6R)-5,10-methylene-5,6,7,8-tetrahydrofolate.

It catalyses the reaction cyclobutadipyrimidine (in DNA) = 2 pyrimidine residues (in DNA).. Its function is as follows. Involved in repair of UV radiation-induced DNA damage. Catalyzes the light-dependent monomerization (300-600 nm) of cyclobutyl pyrimidine dimers (in cis-syn configuration), which are formed between adjacent bases on the same DNA strand upon exposure to ultraviolet radiation. In Neurospora crassa (strain ATCC 24698 / 74-OR23-1A / CBS 708.71 / DSM 1257 / FGSC 987), this protein is Deoxyribodipyrimidine photo-lyase (phr).